Here is a 225-residue protein sequence, read N- to C-terminus: MKKNVQIKGTKDGISIFLSDKASILELQQELSQLLADKKQNPYSGEKLEVQVQIGNRLFSEEEELEISTIIHNNSQMEISAFYSNVMSKDDAKKWKERDQIFSMATIIRSGQVVQVPGDFLLIGDVNPGGQIRSNGNVFVLGNIKGIIHAGFEGDKNAVVAGKFLYPSQVRIADKVYGFDSEDYKEVVDTDLFSAFVNDTDEIVIDEIHKIRKIRPEISNFQGGR.

The protein belongs to the MinC family. Interacts with MinD and FtsZ.

Its function is as follows. Cell division inhibitor that blocks the formation of polar Z ring septums. Rapidly oscillates between the poles of the cell to destabilize FtsZ filaments that have formed before they mature into polar Z rings. Prevents FtsZ polymerization. This Listeria welshimeri serovar 6b (strain ATCC 35897 / DSM 20650 / CCUG 15529 / CIP 8149 / NCTC 11857 / SLCC 5334 / V8) protein is Probable septum site-determining protein MinC.